The primary structure comprises 491 residues: Glutamyl-tRNA(Gln) amidotransferase subunit A (491 aa).

Catalysis depends on charge relay system residues K76 and S154. S178 acts as the Acyl-ester intermediate in catalysis.

This sequence belongs to the amidase family. GatA subfamily. Heterotrimer of A, B and C subunits.

The catalysed reaction is L-glutamyl-tRNA(Gln) + L-glutamine + ATP + H2O = L-glutaminyl-tRNA(Gln) + L-glutamate + ADP + phosphate + H(+). Its function is as follows. Allows the formation of correctly charged Gln-tRNA(Gln) through the transamidation of misacylated Glu-tRNA(Gln) in organisms which lack glutaminyl-tRNA synthetase. The reaction takes place in the presence of glutamine and ATP through an activated gamma-phospho-Glu-tRNA(Gln). This Cereibacter sphaeroides (strain KD131 / KCTC 12085) (Rhodobacter sphaeroides) protein is Glutamyl-tRNA(Gln) amidotransferase subunit A.